Reading from the N-terminus, the 318-residue chain is MITDEKKDERLSIILEPGQIEASAVTPPFLHLPAANLFELRAARLEQLAEGNALGDYLRLIARLCRIQQQLVDNPPGGMPVAEARQRLCMDHGLPPLAADSLVREGPWLVWLQALLEHLSGETRGPMGEALQVLRGSDDNQRKGWGIALLAGQYDGVPAALVPFLGAALQAAWSSWLLALPAHQLKPAGSLAQCPACGSPAMAGVVRNRGKHNGLRYLACSLCACEWHVVRVKCVYCESSKDLRYTSLEDDRHAPGKAPLRAECCPGCDSYLKQNYLENDAAAEPLADDLASLALDIRLDGEGFHRLAPNLMLAPGGG.

It belongs to the FdhE family.

It is found in the cytoplasm. Necessary for formate dehydrogenase activity. The polypeptide is Protein FdhE homolog (Pseudomonas putida (strain ATCC 47054 / DSM 6125 / CFBP 8728 / NCIMB 11950 / KT2440)).